Consider the following 152-residue polypeptide: Large ribosomal subunit protein bL9 (152 aa).

Positions 41–61 (QSAMSQLNAERKAEQRREAEE) are disordered. Residues 49 to 61 (AERKAEQRREAEE) are compositionally biased toward basic and acidic residues.

The protein belongs to the bacterial ribosomal protein bL9 family.

Its function is as follows. Binds to the 23S rRNA. The polypeptide is Large ribosomal subunit protein bL9 (Levilactobacillus brevis (strain ATCC 367 / BCRC 12310 / CIP 105137 / JCM 1170 / LMG 11437 / NCIMB 947 / NCTC 947) (Lactobacillus brevis)).